The sequence spans 143 residues: Endoribonuclease YbeY (143 aa).

Zn(2+) contacts are provided by His-111, His-115, and Asp-121.

Belongs to the endoribonuclease YbeY family. The cofactor is Zn(2+).

It localises to the cytoplasm. Single strand-specific metallo-endoribonuclease involved in late-stage 70S ribosome quality control and in maturation of the 3' terminus of the 16S rRNA. The chain is Endoribonuclease YbeY from Cytophaga hutchinsonii (strain ATCC 33406 / DSM 1761 / CIP 103989 / NBRC 15051 / NCIMB 9469 / D465).